We begin with the raw amino-acid sequence, 660 residues long: MSENSSPKLESTSAAAASTKKPFPEWIKPKGKETELLINNSLTGGKVPFVFNESGKGRSLTWYACGPTVYDASHMGHARTYISFDIIRRIMKNYLGFNIQYVMNITDIDDKIIIRANENGISHSDLSKKWETAFFEDMKLLNVLPPDALTRVTEYVPQIVEYVEKIISNGFAYESNGSVYFDTVAFSKAHDYGKLEPNSVGNEKLAAEGEGSLTATSAVSEKRSGFDFALWKKSKPGEPVWNSPWGEGRPGWHIECSAMASDLLGGNIDIHSGGSDLKFPHHDNELAQSEAFYGNRQWINYFVHSGHLLIDGLKMSKSLKNFITIKQALEKYTSRQMRMFFILHKYDKAMNYSPESMGYAIEMEKTFVEFFHTAKQILRDSPLSLPQFWTQAEKDLNKHLQNANDQVHQFILDNFNTSDALKTLSDLVNKTNVYIRSCAEQKTNPRLNLISAIAEYITYIFSVFGLTESSTASSMIGFGSAGKGNIEEEMTPILNALTQFRSEVRASAIAKDTTSILKTCDNLRDEVLPLLGVKIDDKSATTAMWKFEDKETLKKEIEQKKEIEKKKQADKEEKEKKLKEKFEKSKIPPQQLFINETDKYSKFNELGMPTHDKEGVEITKSQLKKLQKEYDNQTKEHNNYLKSLSTSTSSPTLTSTQSPQ.

The span at 1-10 (MSENSSPKLE) shows a compositional bias: polar residues. The segment at 1 to 20 (MSENSSPKLESTSAAAASTK) is disordered. Cys-65 lines the Zn(2+) pocket. The short motif at 67–77 (PTVYDASHMGH) is the 'HIGH' region element. The Zn(2+) site is built by Cys-256, His-281, and Glu-285. Positions 314 to 318 (KMSKS) match the 'KMSKS' region motif. An ATP-binding site is contributed by Lys-317. Disordered regions lie at residues 563–584 (IEKK…KFEK) and 627–660 (QKEY…QSPQ). Residues 627–639 (QKEYDNQTKEHNN) show a composition bias toward basic and acidic residues. Low complexity predominate over residues 643–660 (SLSTSTSSPTLTSTQSPQ).

Belongs to the class-I aminoacyl-tRNA synthetase family. Zn(2+) serves as cofactor.

Its subcellular location is the cytoplasm. The catalysed reaction is tRNA(Cys) + L-cysteine + ATP = L-cysteinyl-tRNA(Cys) + AMP + diphosphate. The sequence is that of Cysteine--tRNA ligase, cytoplasmic (cysS) from Dictyostelium discoideum (Social amoeba).